A 348-amino-acid chain; its full sequence is MSSVFSYFNESWMLLLATVFGLAFFLGIFLGRPVISWLKKQNHYDQVHKEHCEKLEALHQDKKNTPTAGGILFCIVLLTTVFLWLPLGKLSTWLFVFLIISWGTLGWYDDIIKKERKKGHGITAKQKFVIQLIISAITIVTIFSIYKGSALFCTLQVPFFGTVSVGHSILGKFFYFVLAMLTIVGTSNAVNLTDGLDGLAAGTTCMSALGLLVVALSNPTMPLAQDVSIVLSALIGISFAFLKYNRAPAQVFMGDTGSLLIGGVLGSCAVMLRAELLLILLGGVFVAEAGSVILQVGSCRLRKKRIFLCSPLHHHYEYKGISETKVVARFYIAGLLCMILGIIAALWR.

10 helical membrane passes run 11–31, 68–88, 92–112, 128–148, 165–185, 196–216, 222–242, 251–271, 276–296, and 326–346; these read SWMLLLATVFGLAFFLGIFLG, AGGILFCIVLLTTVFLWLPLG, TWLFVFLIISWGTLGWYDDII, FVIQLIISAITIVTIFSIYKG, VGHSILGKFFYFVLAMLTIVG, LDGLAAGTTCMSALGLLVVAL, PLAQDVSIVLSALIGISFAFL, VFMGDTGSLLIGGVLGSCAVM, LLLILLGGVFVAEAGSVILQV, and VVARFYIAGLLCMILGIIAAL.

This sequence belongs to the glycosyltransferase 4 family. MraY subfamily. Requires Mg(2+) as cofactor.

The protein resides in the cell inner membrane. The catalysed reaction is UDP-N-acetyl-alpha-D-muramoyl-L-alanyl-gamma-D-glutamyl-meso-2,6-diaminopimeloyl-D-alanyl-D-alanine + di-trans,octa-cis-undecaprenyl phosphate = di-trans,octa-cis-undecaprenyl diphospho-N-acetyl-alpha-D-muramoyl-L-alanyl-D-glutamyl-meso-2,6-diaminopimeloyl-D-alanyl-D-alanine + UMP. It participates in cell wall biogenesis; peptidoglycan biosynthesis. In terms of biological role, catalyzes the initial step of the lipid cycle reactions in the biosynthesis of the cell wall peptidoglycan: transfers peptidoglycan precursor phospho-MurNAc-pentapeptide from UDP-MurNAc-pentapeptide onto the lipid carrier undecaprenyl phosphate, yielding undecaprenyl-pyrophosphoryl-MurNAc-pentapeptide, known as lipid I. The sequence is that of Phospho-N-acetylmuramoyl-pentapeptide-transferase from Chlamydia caviae (strain ATCC VR-813 / DSM 19441 / 03DC25 / GPIC) (Chlamydophila caviae).